A 400-amino-acid polypeptide reads, in one-letter code: Serpin E3 (400 aa).

A signal peptide spans 1–19 (MQSLLLALLLLPVCSPGGA). N-linked (GlcNAc...) asparagine glycosylation is present at asparagine 46.

This sequence belongs to the serpin family.

It localises to the secreted. Probable serine protease inhibitor. In Bos taurus (Bovine), this protein is Serpin E3 (SERPINE3).